A 465-amino-acid polypeptide reads, in one-letter code: Mothers against decapentaplegic homolog 5 (465 aa).

Threonine 2 is subject to N-acetylthreonine. The MH1 domain occupies 13-137 (PAVKRLLGWK…YKRVESPVLP (125 aa)). Zn(2+) contacts are provided by cysteine 65, cysteine 110, cysteine 122, and histidine 127. A disordered region spans residues 163–243 (NEPHMPQNAT…GQDNSQPMDT (81 aa)). Positions 169 to 182 (QNATFPDSFHQPNS) are enriched in polar residues. Residues 186–197 (PLSPNSPYPPSP) show a composition bias toward pro residues. Low complexity predominate over residues 198-214 (ASSTYPNSPASSGPGSP). Residues 234-243 (GQDNSQPMDT) are compositionally biased toward polar residues. Residues 271 to 465 (WCSIVYYELN…SPLNPISSVS (195 aa)) form the MH2 domain. Phosphoserine is present on residues serine 463 and serine 465.

The protein belongs to the dwarfin/SMAD family. In terms of assembly, homodimer. Forms trimers with the co-SMAD SMAD4. Interacts with PEBP2-alpha subunit and SMURF1. Interacts with SUV39H1 and SUV39H2. Interacts (via MH2 domain) with LEMD3. Interacts with WWP1. Interacts with TMEM119. Interacts with ZNF8. Interacts with RANBP3L. Interacts with HK1. Interacts with HGS; this interaction attenuates BMP signaling. Phosphorylated on serine by BMP (bone morphogenetic proteins) type 1 receptor kinase. In terms of processing, ubiquitin-mediated proteolysis by SMAD-specific E3 ubiquitin ligase SMURF1.

The protein resides in the cytoplasm. Its subcellular location is the nucleus. The protein localises to the mitochondrion. Transcriptional regulator that plays a role in various cellular processes including embryonic development, cell differentiation, angiogenesis and tissue homeostasis. Upon BMP ligand binding to their receptors at the cell surface, is phosphorylated by activated type I BMP receptors (BMPRIs) and associates with SMAD4 to form a heteromeric complex which translocates into the nucleus acting as transcription factor. In turn, the hetero-trimeric complex recognizes cis-regulatory elements containing Smad Binding Elements (SBEs) to modulate the outcome of the signaling network. Non-phosphorylated SMAD5 has a cytoplasmic role in energy metabolism regulation by promoting mitochondrial respiration and glycolysis in response to cytoplasmic pH changes. Mechanistically, interacts with hexokinase 1/HK1 and thereby accelerates glycolysis. The protein is Mothers against decapentaplegic homolog 5 (Smad5) of Rattus norvegicus (Rat).